A 331-amino-acid chain; its full sequence is Ketol-acid reductoisomerase (NADP(+)) (331 aa).

Residues 2–182 form the KARI N-terminal Rossmann domain; that stretch reads AQLFYDSDAD…GGTRAGILET (181 aa). NADP(+)-binding positions include 25–28, Ser51, Ser53, and 83–86; these read YGSQ and DEFQ. His108 is a catalytic residue. NADP(+) is bound at residue Gly134. The KARI C-terminal knotted domain occupies 183-328; sequence NFKEETETDL…KGLRAMFSWL (146 aa). Asp191, Glu195, Glu227, and Glu231 together coordinate Mg(2+). Substrate is bound at residue Ser252.

This sequence belongs to the ketol-acid reductoisomerase family. Mg(2+) serves as cofactor.

The catalysed reaction is (2R)-2,3-dihydroxy-3-methylbutanoate + NADP(+) = (2S)-2-acetolactate + NADPH + H(+). It carries out the reaction (2R,3R)-2,3-dihydroxy-3-methylpentanoate + NADP(+) = (S)-2-ethyl-2-hydroxy-3-oxobutanoate + NADPH + H(+). The protein operates within amino-acid biosynthesis; L-isoleucine biosynthesis; L-isoleucine from 2-oxobutanoate: step 2/4. Its pathway is amino-acid biosynthesis; L-valine biosynthesis; L-valine from pyruvate: step 2/4. Involved in the biosynthesis of branched-chain amino acids (BCAA). Catalyzes an alkyl-migration followed by a ketol-acid reduction of (S)-2-acetolactate (S2AL) to yield (R)-2,3-dihydroxy-isovalerate. In the isomerase reaction, S2AL is rearranged via a Mg-dependent methyl migration to produce 3-hydroxy-3-methyl-2-ketobutyrate (HMKB). In the reductase reaction, this 2-ketoacid undergoes a metal-dependent reduction by NADPH to yield (R)-2,3-dihydroxy-isovalerate. This Prochlorococcus marinus (strain MIT 9211) protein is Ketol-acid reductoisomerase (NADP(+)).